Here is a 652-residue protein sequence, read N- to C-terminus: Sodium-dependent nutrient amino acid transporter 1 (652 aa).

Positions 1–54 (MELKGVHQQNGTSNGTGAVGAEGESAPPTAPATAEAAASLETTTEKVDAEQQKP) are disordered. Residues 1–58 (MELKGVHQQNGTSNGTGAVGAEGESAPPTAPATAEAAASLETTTEKVDAEQQKPERTN) lie on the Cytoplasmic side of the membrane. Residues 7 to 16 (HQQNGTSNGT) show a composition bias toward polar residues. Positions 21–42 (AEGESAPPTAPATAEAAASLET) are enriched in low complexity. Over residues 43 to 54 (TTEKVDAEQQKP) the composition is skewed to basic and acidic residues. 4 helical membrane passes run 59-79 (WGNGLEFLMSCISVSVGLGNV), 92-112 (GAFLIPYIIVLFLIGKPMYYL), 130-150 (VVPGFVGVGYGQAFATICIIT), and 155-175 (LLALTLYYLFVSFQSVLPWSY). Residues Asn-201 and Asn-204 are each glycosylated (N-linked (GlcNAc...) asparagine). Helical transmembrane passes span 240-260 (PDWKLTLALFVSWVVIFLVIM), 269-289 (AAYFLALFPYVVLFILLVRAV), 318-338 (AVVQCFFSLAVGSGPIIMFAS), 352-372 (IVTTLDTLTSLLGGITIFAIL), 412-432 (LFSVLFFFMLFVLGIGSIVAL), 458-478 (ICGFLMGLVYVTPGGQWILTL), 485-505 (TYVVFILAIFELAGIVWIYGM), 527-547 (CWSFFTPVMMIVIFIYSMVTI), and 564-584 (AGWLLFGIGAAQFPLWWMWYI).

It belongs to the sodium:neurotransmitter symporter (SNF) (TC 2.A.22) family.

It is found in the membrane. In terms of biological role, unusual broad substrate spectrum amino acid:sodium cotransporter that promotes absorption of the D isomers of essential amino acids. Neutral amino acids are the preferred substrates, especially methionine and phenylalanine. The sequence is that of Sodium-dependent nutrient amino acid transporter 1 from Drosophila persimilis (Fruit fly).